A 372-amino-acid polypeptide reads, in one-letter code: Alanine dehydrogenase 2 (372 aa).

His-95 is an active-site residue. 169 to 199 (KVTIIGGGQAGTNAAKIALGLGADVTILDVN) contributes to the NAD(+) binding site.

Belongs to the AlaDH/PNT family.

The enzyme catalyses L-alanine + NAD(+) + H2O = pyruvate + NH4(+) + NADH + H(+). Its pathway is amino-acid degradation; L-alanine degradation via dehydrogenase pathway; NH(3) and pyruvate from L-alanine: step 1/1. Functionally, may play a role in cell wall synthesis as L-alanine is an important constituent of the peptidoglycan layer. The chain is Alanine dehydrogenase 2 (ald2) from Staphylococcus aureus (strain MRSA252).